The following is a 597-amino-acid chain: Cytosolic Fe-S cluster assembly factor nar1 (597 aa).

Positions 20, 61, 64, 67, 209, and 264 each coordinate [4Fe-4S] cluster. A disordered region spans residues 419–447 (PARASRLPGARQSATSAGGSRRQLASRNA). A compositionally biased stretch (polar residues) spans 430–447 (QSATSAGGSRRQLASRNA). 2 residues coordinate [4Fe-4S] cluster: cysteine 464 and cysteine 468. Positions 482 to 504 (EAASNMSVESQTEPPEAALKPTP) are disordered. Over residues 485–494 (SNMSVESQTE) the composition is skewed to polar residues.

It belongs to the NARF family.

Functionally, component of the cytosolic Fe/S protein assembly machinery. Required for maturation of extramitochondrial Fe/S proteins. May play a role in the transfer of pre-assembled Fe/S clusters to target apoproteins. The polypeptide is Cytosolic Fe-S cluster assembly factor nar1 (nar1) (Aspergillus clavatus (strain ATCC 1007 / CBS 513.65 / DSM 816 / NCTC 3887 / NRRL 1 / QM 1276 / 107)).